The following is a 530-amino-acid chain: Bifunctional purine biosynthesis protein PurH (530 aa).

The region spanning 1–148 is the MGS-like domain; the sequence is MNNARPIRRA…KNHKDVTIVV (148 aa).

The protein belongs to the PurH family.

The catalysed reaction is (6R)-10-formyltetrahydrofolate + 5-amino-1-(5-phospho-beta-D-ribosyl)imidazole-4-carboxamide = 5-formamido-1-(5-phospho-D-ribosyl)imidazole-4-carboxamide + (6S)-5,6,7,8-tetrahydrofolate. The enzyme catalyses IMP + H2O = 5-formamido-1-(5-phospho-D-ribosyl)imidazole-4-carboxamide. It participates in purine metabolism; IMP biosynthesis via de novo pathway; 5-formamido-1-(5-phospho-D-ribosyl)imidazole-4-carboxamide from 5-amino-1-(5-phospho-D-ribosyl)imidazole-4-carboxamide (10-formyl THF route): step 1/1. It functions in the pathway purine metabolism; IMP biosynthesis via de novo pathway; IMP from 5-formamido-1-(5-phospho-D-ribosyl)imidazole-4-carboxamide: step 1/1. The chain is Bifunctional purine biosynthesis protein PurH from Aliivibrio fischeri (strain ATCC 700601 / ES114) (Vibrio fischeri).